The primary structure comprises 317 residues: Gamma-glutamyl hydrolase (317 aa).

The first 24 residues, 1-24, serve as a signal peptide directing secretion; it reads MASLGRLLCAWVLLLCGLASPGLS. A Gamma-glutamyl hydrolase domain is found at 25-317; the sequence is GSYERGSKRP…SSFQQAYMFN (293 aa). N-linked (GlcNAc...) asparagine glycosylation is found at N46 and N100. C133 acts as the Nucleophile in catalysis. Residues N153, N162, N188, and N202 are each glycosylated (N-linked (GlcNAc...) asparagine). H243 functions as the Proton donor in the catalytic mechanism. Residue N306 is glycosylated (N-linked (GlcNAc...) asparagine).

It belongs to the peptidase C26 family. As to quaternary structure, homodimer.

The protein resides in the secreted. The protein localises to the extracellular space. It is found in the lysosome. It localises to the melanosome. It catalyses the reaction (6S)-5,6,7,8-tetrahydrofolyl-(gamma-L-Glu)(n) + (n-1) H2O = (6S)-5,6,7,8-tetrahydrofolate + (n-1) L-glutamate. Its activity is regulated as follows. Activity is altered by insulin and estrogen. Hydrolyzes the polyglutamate sidechains of pteroylpolyglutamates. Progressively removes gamma-glutamyl residues from pteroylpoly-gamma-glutamate to yield pteroyl-alpha-glutamate (folic acid) and free glutamate. May play an important role in the bioavailability of dietary pteroylpolyglutamates and in the metabolism of pteroylpolyglutamates and antifolates. Exhibits either endo- or exopeptidase activity depending upon the tissue of origin. When secreted, it acts primarily as an endopeptidase. The chain is Gamma-glutamyl hydrolase (Ggh) from Rattus norvegicus (Rat).